The sequence spans 207 residues: Ras-related protein Rab-8A (207 aa).

10 residues coordinate GTP: Ser17, Gly18, Val19, Gly20, Lys21, Thr22, Cys23, Ser35, Ser39, and Thr40. Thr22 lines the Mg(2+) pocket. 2 consecutive short sequence motifs (switch) follow at residues 31–45 (DAFNSTFISTIGIDF) and 63–80 (DTAGQERFRTITTAYYRG). The Mg(2+) site is built by Thr40 and Asp63. Gly66 is a GTP binding site. A Phosphothreonine modification is found at Thr72. Residues Asn121, Lys122, Asp124, Ala152, and Lys153 each coordinate GTP. Ser181 and Ser185 each carry phosphoserine. Cys204 is subject to Cysteine methyl ester. Cys204 carries the S-geranylgeranyl cysteine lipid modification. Positions 205-207 (VLL) are cleaved as a propeptide — removed in mature form.

This sequence belongs to the small GTPase superfamily. Rab family. As to quaternary structure, interacts (GTP-bound form) with MICALL1; regulates RAB8A association with recycling endosomes. Interacts with MICALL2; competes with RAB13 and is involved in E-cadherin endocytic recycling. Interacts (GTP-bound form) with MICAL1, MICALCL, MICAL3, EHBP1 and EHBP1L1; at least in case of MICAL1, MICALCL, MICAL3 and EHBP1L1 two molecules of RAB8A can bind to one molecule of the effector protein; ternary complexes of RAB8A, RAB13 and either MICAL1 or EHBP1L1 are possible. Interacts with EHD1. Interacts with MAP4K2 and SYTL4. Interacts with SGSM1 and SGSM3. Interacts with RABIF, RIMS2, RPH3A and RPH3A. Interacts with OPTN. Interacts with RAB3IP, RAB3IP functions as guanine exchange factor (GEF). Interacts with MYO5B. Interacts with CIMAP3. Interacts with BIRC6/bruce. Interacts with OCRL. Interacts with AHI1. Interacts with DCDC1. Interacts with LRRK2; interaction facilitates phosphorylation of Thr-72. Interacts with RAB31P, GDI1, GDI2, CHM, CHML, RABGGTA, RABGGTB, TBC1D15 and INPP5B; these interactions are dependent on Thr-72 not being phosphorylated. Interacts with RILPL1 and RILPL2; these interactions are dependent on the phosphorylation of Thr-72 by LRRK2. Interacts with DZIP1; prevents inhibition by the GDP-dissociation inhibitor GDI2. Interacts (in GDP-bound form) with RAB3IP/Rabin8, RAB3IP functions as guanine exchange factor (GEF) towards RAB8A. Interacts (in GDP-bound form) with RPGR, RPGR functions as GEF towards RAB8A. Mg(2+) serves as cofactor. In terms of processing, phosphorylation of Thr-72 in the switch II region by LRRK2 prevents the association of RAB regulatory proteins, including CHM, CHML and RAB GDP dissociation inhibitors GDI1 and GDI2. Phosphorylation by LRRK2 is required for localization to stressed lysosomes.

Its subcellular location is the cell membrane. It is found in the golgi apparatus. It localises to the endosome membrane. The protein localises to the recycling endosome membrane. The protein resides in the cell projection. Its subcellular location is the cilium. It is found in the cytoplasmic vesicle. It localises to the phagosome membrane. The protein localises to the cytoplasm. The protein resides in the cytoskeleton. Its subcellular location is the microtubule organizing center. It is found in the centrosome. It localises to the centriole. The protein localises to the cilium basal body. The protein resides in the midbody. Its subcellular location is the lysosome. It carries out the reaction GTP + H2O = GDP + phosphate + H(+). Regulated by guanine nucleotide exchange factors (GEFs) such as RAB3IP/Rabin8 and RPGR which promote the exchange of bound GDP for free GTP, GTPase activating proteins (GAPs) which increase the GTP hydrolysis activity, and GDP dissociation inhibitors (GDIs) which inhibit the dissociation of the nucleotide from the GTPase. Activated in response to insulin. Functionally, the small GTPases Rab are key regulators of intracellular membrane trafficking, from the formation of transport vesicles to their fusion with membranes. Rabs cycle between an inactive GDP-bound form and an active GTP-bound form that is able to recruit to membranes different sets of downstream effectors directly responsible for vesicle formation, movement, tethering and fusion. RAB8A is involved in polarized vesicular trafficking and neurotransmitter release. Together with RAB11A, RAB3IP, the exocyst complex, PARD3, PRKCI, ANXA2, CDC42 and DNMBP promotes transcytosis of PODXL to the apical membrane initiation sites (AMIS), apical surface formation and lumenogenesis. Regulates the compacted morphology of the Golgi. Together with MYO5B and RAB11A participates in epithelial cell polarization. Also involved in membrane trafficking to the cilium and ciliogenesis. Together with MICALL2, may also regulate adherens junction assembly. May play a role in insulin-induced transport to the plasma membrane of the glucose transporter GLUT4 and therefore play a role in glucose homeostasis. Involved in autophagy. Participates in the export of a subset of neosynthesized proteins through a Rab8-Rab10-Rab11-dependent endososomal export route. Targeted to and stabilized on stressed lysosomes through LRRK2 phosphorylation. Suppresses stress-induced lysosomal enlargement through EHBP1 and EHNP1L1 effector proteins. In Pongo abelii (Sumatran orangutan), this protein is Ras-related protein Rab-8A (RAB8A).